We begin with the raw amino-acid sequence, 853 residues long: Ion channel CASTOR (853 aa).

Low complexity predominate over residues 1–30 (MSLDSEVSVSSSSGRDWFFPSPSFFRSSPS). The tract at residues 1–55 (MSLDSEVSVSSSSGRDWFFPSPSFFRSSPSQYGRRFHTNSNTHSAPSSTYPSGIR) is disordered. Over residues 38-51 (TNSNTHSAPSSTYP) the composition is skewed to polar residues. Residues 96-116 (QFGLQFALVTLTIVFLLLLLL) form a helical membrane-spanning segment. Positions 117-137 (RNTHLESQVNKLQGEILRLHA) form a coiled coil. Helical transmembrane passes span 168-188 (NLAL…FKYI), 227-247 (LVLL…LFGV), and 279-299 (LVAV…LGLV). RCK N-terminal domains follow at residues 320-461 (QNHT…ETVV) and 580-752 (PERI…DYVL).

The protein belongs to the castor/pollux (TC 1.A.1.23) family. Homooligomer. In terms of tissue distribution, expressed in infected and uninfected roots, leaves, seed pods, and flower buds.

The protein resides in the nucleus membrane. Ion channel with a moderate preference for potassium over sodium and calcium. Involved in perinuclear calcium spiking but not in cytosolic calcium influx. Closed at negative voltages in presence of magnesium. Required for early signal transduction events leading to endosymbiosis. Acts early in a signal transduction chain leading from the perception of Nod factor to the activation of calcium spiking. Also involved in fungal entry into root epidermal cells during the establishment of the arbuscular mycorrhizal symbiosis. The protein is Ion channel CASTOR (CASTOR) of Lotus japonicus (Lotus corniculatus var. japonicus).